The chain runs to 128 residues: uncharacterized protein (128 aa).

This is an uncharacterized protein from Escherichia coli (Bacteriophage T4).